A 314-amino-acid chain; its full sequence is 4-hydroxy-3-methylbut-2-enyl diphosphate reductase (314 aa).

Residue Cys-12 participates in [4Fe-4S] cluster binding. The (2E)-4-hydroxy-3-methylbut-2-enyl diphosphate site is built by His-41 and His-74. His-41 and His-74 together coordinate dimethylallyl diphosphate. His-41 and His-74 together coordinate isopentenyl diphosphate. Cys-96 serves as a coordination point for [4Fe-4S] cluster. (2E)-4-hydroxy-3-methylbut-2-enyl diphosphate is bound at residue His-124. His-124 lines the dimethylallyl diphosphate pocket. Isopentenyl diphosphate is bound at residue His-124. The active-site Proton donor is the Glu-126. Position 167 (Thr-167) interacts with (2E)-4-hydroxy-3-methylbut-2-enyl diphosphate. Cys-197 is a [4Fe-4S] cluster binding site. Ser-225, Ser-226, Asn-227, and Ser-269 together coordinate (2E)-4-hydroxy-3-methylbut-2-enyl diphosphate. Dimethylallyl diphosphate-binding residues include Ser-225, Ser-226, Asn-227, and Ser-269. The isopentenyl diphosphate site is built by Ser-225, Ser-226, Asn-227, and Ser-269.

Belongs to the IspH family. [4Fe-4S] cluster serves as cofactor.

It catalyses the reaction isopentenyl diphosphate + 2 oxidized [2Fe-2S]-[ferredoxin] + H2O = (2E)-4-hydroxy-3-methylbut-2-enyl diphosphate + 2 reduced [2Fe-2S]-[ferredoxin] + 2 H(+). The enzyme catalyses dimethylallyl diphosphate + 2 oxidized [2Fe-2S]-[ferredoxin] + H2O = (2E)-4-hydroxy-3-methylbut-2-enyl diphosphate + 2 reduced [2Fe-2S]-[ferredoxin] + 2 H(+). It functions in the pathway isoprenoid biosynthesis; dimethylallyl diphosphate biosynthesis; dimethylallyl diphosphate from (2E)-4-hydroxy-3-methylbutenyl diphosphate: step 1/1. Its pathway is isoprenoid biosynthesis; isopentenyl diphosphate biosynthesis via DXP pathway; isopentenyl diphosphate from 1-deoxy-D-xylulose 5-phosphate: step 6/6. In terms of biological role, catalyzes the conversion of 1-hydroxy-2-methyl-2-(E)-butenyl 4-diphosphate (HMBPP) into a mixture of isopentenyl diphosphate (IPP) and dimethylallyl diphosphate (DMAPP). Acts in the terminal step of the DOXP/MEP pathway for isoprenoid precursor biosynthesis. In Actinobacillus succinogenes (strain ATCC 55618 / DSM 22257 / CCUG 43843 / 130Z), this protein is 4-hydroxy-3-methylbut-2-enyl diphosphate reductase.